Reading from the N-terminus, the 313-residue chain is 4-diphosphocytidyl-2-C-methyl-D-erythritol kinase (313 aa).

Residue Lys-27 is part of the active site. 110–120 contributes to the ATP binding site; sequence PIGGGVGGGSS. The active site involves Asp-152.

Belongs to the GHMP kinase family. IspE subfamily.

It catalyses the reaction 4-CDP-2-C-methyl-D-erythritol + ATP = 4-CDP-2-C-methyl-D-erythritol 2-phosphate + ADP + H(+). The protein operates within isoprenoid biosynthesis; isopentenyl diphosphate biosynthesis via DXP pathway; isopentenyl diphosphate from 1-deoxy-D-xylulose 5-phosphate: step 3/6. Functionally, catalyzes the phosphorylation of the position 2 hydroxy group of 4-diphosphocytidyl-2C-methyl-D-erythritol. The polypeptide is 4-diphosphocytidyl-2-C-methyl-D-erythritol kinase (Histophilus somni (strain 2336) (Haemophilus somnus)).